The sequence spans 183 residues: MMSKQDAAKAPVNPIVLGKMGSSYGIRGWLRVFSSTEDAESIFDYQPWFIQQAGQWQQVQLESWKHHNQDMIIKLKGVDDRDAANLLTNCEIVVDSSQLPDLEEGDYYWKDLIGCQVVTTEGYSLGKVIDMMETGSNDVLVVKANLKDAFGIKERLLPFLDGQVIKKVDLATQTIEVDWDPGF.

A PRC barrel domain is found at 104–183 (EGDYYWKDLI…TIEVDWDPGF (80 aa)).

This sequence belongs to the RimM family. Binds ribosomal protein uS19.

The protein localises to the cytoplasm. In terms of biological role, an accessory protein needed during the final step in the assembly of 30S ribosomal subunit, possibly for assembly of the head region. Essential for efficient processing of 16S rRNA. May be needed both before and after RbfA during the maturation of 16S rRNA. It has affinity for free ribosomal 30S subunits but not for 70S ribosomes. The chain is Ribosome maturation factor RimM from Cronobacter sakazakii (strain ATCC BAA-894) (Enterobacter sakazakii).